An 831-amino-acid chain; its full sequence is Protein ADP-ribosyltransferase PARP3 (831 aa).

The segment at 1-69 (MVHETRSRTL…KKLKAEESDL (69 aa)) is disordered. 2 stretches are compositionally biased toward basic and acidic residues: residues 15–32 (EEGK…KEQE) and 43–66 (KTAD…KAEE). The PADR1 zinc-binding domain occupies 49-199 (EHDGEQEPSK…NKYPKRNLDD (151 aa)). The interval 124–168 (GPLDKCPVCGGQLECKGLKYNCTGTHSEWACCSFSTNNPSRRGGP) is zinc ribbon. Zn(2+) contacts are provided by cysteine 129, cysteine 132, cysteine 145, and cysteine 155. Positions 200–290 (EGIFSGMMIA…EKQPLAAYDI (91 aa)) constitute a BRCT domain. Residues 338-439 (GGHIYEKDGI…KKFKKKCMKM (102 aa)) enclose the WGR domain. Residues 466–585 (HCKLDPSVTF…DINVASRLIG (120 aa)) form the PARP alpha-helical domain. A PARP catalytic domain is found at 594–827 (DPLSQCYKKL…VKYEEQNMEV (234 aa)).

The protein belongs to the ARTD/PARP family.

The protein localises to the nucleus. It catalyses the reaction L-aspartyl-[protein] + NAD(+) = 4-O-(ADP-D-ribosyl)-L-aspartyl-[protein] + nicotinamide. The catalysed reaction is L-glutamyl-[protein] + NAD(+) = 5-O-(ADP-D-ribosyl)-L-glutamyl-[protein] + nicotinamide. Functionally, involved in the base excision repair (BER) pathway, by catalyzing the poly(ADP-ribosyl)ation of a limited number of acceptor proteins involved in chromatin architecture and in DNA metabolism. This modification follows DNA damages and appears as an obligatory step in a detection/signaling pathway leading to the reparation of DNA strand breaks. This is Protein ADP-ribosyltransferase PARP3 (PARP3) from Oryza sativa subsp. japonica (Rice).